A 343-amino-acid chain; its full sequence is Plasminogen (343 aa).

2 consecutive Kringle domains span residues 1–17 and 41–120; these read APQAPSVENPPEADCML and AQEP…GCVA. The plasmin heavy chain A stretch occupies residues 1–140; sequence APQAPSVENP…LRRRSREHFC (140 aa). Cystine bridges form between Cys15–Cys94, Cys36–Cys77, and Cys65–Cys89. The region spanning 114–341 is the Peptidase S1 domain; that stretch reads VVGGCVATPH…YVPWIEETMR (228 aa). Ser130 carries the post-translational modification Phosphoserine. An intrachain disulfide couples Cys140 to Cys156. A plasmin light chain B region spans residues 141–343; that stretch reads GGTLISPEWV…PWIEETMRRY (203 aa). Active-site charge relay system residues include His155 and Asp198. Position 221 is a phosphoserine (Ser221). 3 disulfides stabilise this stretch: Cys232–Cys299, Cys262–Cys278, and Cys289–Cys317. The active-site Charge relay system is Ser293.

This sequence belongs to the peptidase S1 family. Plasminogen subfamily. As to quaternary structure, interacts with CSPG4 and AMOT. Interacts (via the Kringle domains) with HRG; the interaction tethers PLG to the cell surface and enhances its activation. Interacts (via Kringle 4 domain) with ADA; the interaction stimulates PLG activation when in complex with DPP4. Angiostatin: Interacts with ATP5F1A; the interaction inhibits most of the angiogenic effects of angiostatin.

The protein localises to the secreted. It carries out the reaction Preferential cleavage: Lys-|-Xaa &gt; Arg-|-Xaa, higher selectivity than trypsin. Converts fibrin into soluble products.. Its activity is regulated as follows. Converted into plasmin by plasminogen activators, both plasminogen and its activator being bound to fibrin. Cannot be activated with streptokinase. Plasmin dissolves the fibrin of blood clots and acts as a proteolytic factor in a variety of other processes including embryonic development, tissue remodeling, tumor invasion, and inflammation. In ovulation, weakens the walls of the Graafian follicle. It activates the urokinase-type plasminogen activator, collagenases and several complement zymogens, such as C1, C4 and C5. Cleavage of fibronectin and laminin leads to cell detachment and apoptosis. Also cleaves fibrin, thrombospondin and von Willebrand factor. Its role in tissue remodeling and tumor invasion may be modulated by CSPG4. Binds to cells. This chain is Plasminogen (PLG), found in Ovis aries (Sheep).